A 176-amino-acid chain; its full sequence is Cytochrome b (176 aa).

A run of 3 helical transmembrane segments spans residues 33–53, 77–98, and 113–133; these read FGSLLGICLTIQILTGLFLAM, WLLRYLHANGASMFFICLYLHV, and WNMGIILLFAVMATAFMGYVL. Residues histidine 83 and histidine 97 each coordinate heme b.

The protein belongs to the cytochrome b family. In terms of assembly, the cytochrome bc1 complex contains 11 subunits: 3 respiratory subunits (MT-CYB, CYC1 and UQCRFS1), 2 core proteins (UQCRC1 and UQCRC2) and 6 low-molecular weight proteins (UQCRH/QCR6, UQCRB/QCR7, UQCRQ/QCR8, UQCR10/QCR9, UQCR11/QCR10 and a cleavage product of UQCRFS1). This cytochrome bc1 complex then forms a dimer. The cofactor is heme b.

Its subcellular location is the mitochondrion inner membrane. Its function is as follows. Component of the ubiquinol-cytochrome c reductase complex (complex III or cytochrome b-c1 complex) that is part of the mitochondrial respiratory chain. The b-c1 complex mediates electron transfer from ubiquinol to cytochrome c. Contributes to the generation of a proton gradient across the mitochondrial membrane that is then used for ATP synthesis. The chain is Cytochrome b (MT-CYB) from Tomopeas ravum (Blunt-eared bat).